We begin with the raw amino-acid sequence, 496 residues long: E3 ubiquitin-protein ligase CBL-C (496 aa).

Positions Pro7–Cys144 are 4H. In terms of domain architecture, Cbl-PTB spans Pro7–Glu320. Residues Gly145–Phe217 are EF-hand-like. The Ca(2+) site is built by Asp198, Thr200, Asn202, and Glu209. The tract at residues Gln218–Glu320 is SH2-like. Residue Arg263 participates in 4-O-phospho-L-tyrosine binding. Residues Leu321–Leu349 are linker. Tyr340 carries the post-translational modification Phosphotyrosine; by SRC. Residues Cys350–Arg389 form an RING-type zinc finger. Positions Cys350–Glu494 are interaction with RET. The interval Pro432 to Lys453 is disordered.

As to quaternary structure, interacts with Ubiquitin-conjugating enzyme E2 UBE2D2 and UBE2D3. Isoform 1 interacts with EGFR (tyrosine phosphorylated). Interacts with the SH3 domain proteins LYN and CRK. Interacts (via RING-type zinc finger) with TGFB1I1 (via LIM zinc-binding domain 2); the interaction is direct and enhances the E3 activity. Interacts directly with RET (inactive) and CD2AP; dissociates from RET upon RET activation by GDNF which also increases the interaction with CD2AP suggesting dissociation as CBLC:CD2AP complex. Interacts with SRC; the interaction is enhanced when SRC is phosphorylated at 'Tyr-419'. Post-translationally, phosphorylated on tyrosines by EGFR. Phosphorylated on multiple tyrosine residues by SRC. Isoform 1, but not isoform 2, is phosphorylated on tyrosines by EGFR. In terms of processing, autoubiquitinated, when phosphorylated at Tyr-340. As to expression, widely expressed in tissues, where the expression is restricted to epithelial cells (at protein level).

The enzyme catalyses S-ubiquitinyl-[E2 ubiquitin-conjugating enzyme]-L-cysteine + [acceptor protein]-L-lysine = [E2 ubiquitin-conjugating enzyme]-L-cysteine + N(6)-ubiquitinyl-[acceptor protein]-L-lysine.. Phosphorylation at Tyr-340 is necessary and sufficient for the activation of E3 activity. Functionally, acts as an E3 ubiquitin-protein ligase, which accepts ubiquitin from specific E2 ubiquitin-conjugating enzymes, and then transfers it to substrates promoting their degradation by the proteasome. Functionally coupled with the E2 ubiquitin-protein ligases UB2D1, UB2D2 and UB2D3. Regulator of EGFR mediated signal transduction; upon EGF activation, ubiquitinates EGFR. Isoform 1, but not isoform 2, inhibits EGF stimulated MAPK1 activation. Promotes ubiquitination of SRC phosphorylated at 'Tyr-424', has the highest ubiquitin ligase activity among CBL family proteins. In collaboration with CD2AP may act as regulatory checkpoint for Ret signaling by modulating the rate of RET degradation after ligand activation; CD2AP converts it from an inhibitor to a promoter of RET degradation; the function limits the potency of GDNF on neuronal survival. The sequence is that of E3 ubiquitin-protein ligase CBL-C (Cblc) from Mus musculus (Mouse).